We begin with the raw amino-acid sequence, 188 residues long: Ribosome-recycling factor (188 aa).

The protein belongs to the RRF family.

It localises to the cytoplasm. Functionally, responsible for the release of ribosomes from messenger RNA at the termination of protein biosynthesis. May increase the efficiency of translation by recycling ribosomes from one round of translation to another. The polypeptide is Ribosome-recycling factor (Cereibacter sphaeroides (strain ATCC 17029 / ATH 2.4.9) (Rhodobacter sphaeroides)).